A 665-amino-acid polypeptide reads, in one-letter code: MSELNMELKKLRELELKTQGLAARIQTAKSGEQLDVDLVQLQIENKKLKNRLFILKKSIAEESTAAGGDVSKPKESSSITEHLESVFRQAIASAFPEFRDTPVIIAPVNSTSAKFGDYQCNNAMGLSKKLKEKGINKAPRDIATELKGHCPASPIIEKLEIAGAGFVNVFLSKDYASLALSNLLRNGVKPPEVIKKRVLVDFSSPNIAKQMHVGHLRSTIIGESLCRLLEFLQHDVIRINHLGDWGTQFGMLIAHLEDRFPNYLNESPPISDLQLFYKESKKRFDEDEEFKKRAYSRVVSLQKGVPNSIKAWELICNVSRKEFQTIYERLDISVKERGESFYQSRMLSVVEYLRGKGLLEVDEGREIMWPDDTKTGIPLTIVKSDGGFTYDTSDMAAIRHRLEEELCDWIIYVVDSGQSTHFNTIFKAAERSAILNPLSHRVDHVQFGVVLGEDGKKFKTRSGDTVKLSDLLDEGMKRSLQQLESRGRDKVLTPQELKDAQESLAYGCIKYSDLCHNRISDYIFSFDKMLEDRGNTAVYLLYTYTRICSIARNSGEDFTNLPEILKKTNIVLDHEKEWKLAKTLLKLHDILIKCSKELFLHFLCEFCFEVCTVFTEFYDSCYCIEKNKQGDIIGVNHSRILLCEATAAVLRQCFYILGLKPVSKM.

Residues 204 to 206, His-215, Tyr-390, Asp-394, and Gln-418 each bind L-arginine; that span reads SPN. The 'HIGH' region signature appears at 205-216; the sequence is PNIAKQMHVGHL. Positions 535–549 are interaction with tRNA; sequence NTAVYLLYTYTRICS.

This sequence belongs to the class-I aminoacyl-tRNA synthetase family.

Its subcellular location is the cytoplasm. It localises to the cytosol. The enzyme catalyses tRNA(Arg) + L-arginine + ATP = L-arginyl-tRNA(Arg) + AMP + diphosphate. Its function is as follows. Forms part of a macromolecular complex that catalyzes the attachment of specific amino acids to cognate tRNAs during protein synthesis. The protein is Probable arginine--tRNA ligase, cytoplasmic of Drosophila melanogaster (Fruit fly).